Consider the following 284-residue polypeptide: 2-dehydro-3-deoxyphosphooctonate aldolase (284 aa).

This sequence belongs to the KdsA family.

It is found in the cytoplasm. It catalyses the reaction D-arabinose 5-phosphate + phosphoenolpyruvate + H2O = 3-deoxy-alpha-D-manno-2-octulosonate-8-phosphate + phosphate. It participates in carbohydrate biosynthesis; 3-deoxy-D-manno-octulosonate biosynthesis; 3-deoxy-D-manno-octulosonate from D-ribulose 5-phosphate: step 2/3. It functions in the pathway bacterial outer membrane biogenesis; lipopolysaccharide biosynthesis. The protein is 2-dehydro-3-deoxyphosphooctonate aldolase of Shigella boydii serotype 18 (strain CDC 3083-94 / BS512).